A 352-amino-acid polypeptide reads, in one-letter code: Chorismate synthase (352 aa).

Position 48 (arginine 48) interacts with NADP(+). FMN contacts are provided by residues 125 to 127, 238 to 239, glycine 278, 293 to 297, and arginine 319; these read RSS, NA, and KPTSS.

The protein belongs to the chorismate synthase family. In terms of assembly, homotetramer. The cofactor is FMNH2.

The enzyme catalyses 5-O-(1-carboxyvinyl)-3-phosphoshikimate = chorismate + phosphate. It participates in metabolic intermediate biosynthesis; chorismate biosynthesis; chorismate from D-erythrose 4-phosphate and phosphoenolpyruvate: step 7/7. Its function is as follows. Catalyzes the anti-1,4-elimination of the C-3 phosphate and the C-6 proR hydrogen from 5-enolpyruvylshikimate-3-phosphate (EPSP) to yield chorismate, which is the branch point compound that serves as the starting substrate for the three terminal pathways of aromatic amino acid biosynthesis. This reaction introduces a second double bond into the aromatic ring system. The polypeptide is Chorismate synthase (Legionella pneumophila subsp. pneumophila (strain Philadelphia 1 / ATCC 33152 / DSM 7513)).